The sequence spans 278 residues: Formamidopyrimidine-DNA glycosylase (278 aa).

The active-site Schiff-base intermediate with DNA is P2. E3 (proton donor) is an active-site residue. K58 functions as the Proton donor; for beta-elimination activity in the catalytic mechanism. DNA contacts are provided by H92 and R111. Residues 239-273 form an FPG-type zinc finger; sequence HVYGKKGVPCERCGTPIEKIKVAQRGTHFCPKCQI. R263 functions as the Proton donor; for delta-elimination activity in the catalytic mechanism.

The protein belongs to the FPG family. In terms of assembly, monomer. Zn(2+) serves as cofactor.

The catalysed reaction is Hydrolysis of DNA containing ring-opened 7-methylguanine residues, releasing 2,6-diamino-4-hydroxy-5-(N-methyl)formamidopyrimidine.. It carries out the reaction 2'-deoxyribonucleotide-(2'-deoxyribose 5'-phosphate)-2'-deoxyribonucleotide-DNA = a 3'-end 2'-deoxyribonucleotide-(2,3-dehydro-2,3-deoxyribose 5'-phosphate)-DNA + a 5'-end 5'-phospho-2'-deoxyribonucleoside-DNA + H(+). In terms of biological role, involved in base excision repair of DNA damaged by oxidation or by mutagenic agents. Acts as a DNA glycosylase that recognizes and removes damaged bases. Has a preference for oxidized purines, such as 7,8-dihydro-8-oxoguanine (8-oxoG). Has AP (apurinic/apyrimidinic) lyase activity and introduces nicks in the DNA strand. Cleaves the DNA backbone by beta-delta elimination to generate a single-strand break at the site of the removed base with both 3'- and 5'-phosphates. This Latilactobacillus sakei subsp. sakei (strain 23K) (Lactobacillus sakei subsp. sakei) protein is Formamidopyrimidine-DNA glycosylase.